The following is a 449-amino-acid chain: D-inositol 3-phosphate glycosyltransferase (449 aa).

H43 is a 1D-myo-inositol 3-phosphate binding site. UDP-N-acetyl-alpha-D-glucosamine-binding positions include 49–50 (QP) and G57. 1D-myo-inositol 3-phosphate contacts are provided by residues 54-59 (DAGGMN), K112, Y145, T169, and R189. Positions 263, 268, and 324 each coordinate UDP-N-acetyl-alpha-D-glucosamine. 3 residues coordinate Mg(2+): Y333, R334, and A336. Residues E346 and E354 each contribute to the UDP-N-acetyl-alpha-D-glucosamine site. Position 360 (T360) interacts with Mg(2+).

This sequence belongs to the glycosyltransferase group 1 family. MshA subfamily. As to quaternary structure, homodimer.

The enzyme catalyses 1D-myo-inositol 3-phosphate + UDP-N-acetyl-alpha-D-glucosamine = 1D-myo-inositol 2-acetamido-2-deoxy-alpha-D-glucopyranoside 3-phosphate + UDP + H(+). Functionally, catalyzes the transfer of a N-acetyl-glucosamine moiety to 1D-myo-inositol 3-phosphate to produce 1D-myo-inositol 2-acetamido-2-deoxy-glucopyranoside 3-phosphate in the mycothiol biosynthesis pathway. The protein is D-inositol 3-phosphate glycosyltransferase of Segniliparus rotundus (strain ATCC BAA-972 / CDC 1076 / CIP 108378 / DSM 44985 / JCM 13578).